We begin with the raw amino-acid sequence, 434 residues long: Adenylosuccinate synthetase (434 aa).

Residues 22 to 28 (GDEGKGK) and 50 to 52 (GHT) contribute to the GTP site. Residue Asp23 is the Proton acceptor of the active site. Residues Asp23 and Gly50 each contribute to the Mg(2+) site. Residues 23–26 (DEGK), 48–51 (NAGH), Thr139, Arg153, Gln234, Thr249, and Arg313 contribute to the IMP site. The Proton donor role is filled by His51. 309-315 (ATTGRKR) is a binding site for substrate. GTP contacts are provided by residues Arg315, 341-343 (KLD), and 423-425 (SVG).

This sequence belongs to the adenylosuccinate synthetase family. In terms of assembly, homodimer. Mg(2+) serves as cofactor.

The protein localises to the cytoplasm. The enzyme catalyses IMP + L-aspartate + GTP = N(6)-(1,2-dicarboxyethyl)-AMP + GDP + phosphate + 2 H(+). It functions in the pathway purine metabolism; AMP biosynthesis via de novo pathway; AMP from IMP: step 1/2. Plays an important role in the de novo pathway of purine nucleotide biosynthesis. Catalyzes the first committed step in the biosynthesis of AMP from IMP. The protein is Adenylosuccinate synthetase of Chlorobium phaeobacteroides (strain DSM 266 / SMG 266 / 2430).